The primary structure comprises 379 residues: Glutamate 5-kinase (379 aa).

Lysine 14 is an ATP binding site. Residues serine 54, aspartate 141, and asparagine 153 each coordinate substrate. Residues 173–174 and 215–221 contribute to the ATP site; these read TD and TGGMATK. The region spanning 280 to 358 is the PUA domain; sequence KGRLLLDIGA…DEIEPLLGYD (79 aa).

This sequence belongs to the glutamate 5-kinase family.

It localises to the cytoplasm. The catalysed reaction is L-glutamate + ATP = L-glutamyl 5-phosphate + ADP. Its pathway is amino-acid biosynthesis; L-proline biosynthesis; L-glutamate 5-semialdehyde from L-glutamate: step 1/2. Catalyzes the transfer of a phosphate group to glutamate to form L-glutamate 5-phosphate. The chain is Glutamate 5-kinase from Shewanella amazonensis (strain ATCC BAA-1098 / SB2B).